The chain runs to 359 residues: Guanine nucleotide-binding protein G(q) subunit alpha (359 aa).

Residues C9 and C10 are each lipidated (S-palmitoyl cysteine). The G-alpha domain occupies 38–359 (RELKLLLLGT…QLNLKEYNLV (322 aa)). The segment at 41–54 (KLLLLGTGESGKST) is G1 motif. Positions 50, 51, 52, 53, 54, 156, 180, 181, and 183 each coordinate GTP. S53 contributes to the Mg(2+) binding site. Positions 178 to 186 (DVLRVRVPT) are G2 motif. T186 contributes to the Mg(2+) binding site. The G3 motif stretch occupies residues 201 to 210 (FRMVDVGGQR). Q209 is modified (5-glutamyl histamine). Residues 270–277 (ILFLNKKD) are G4 motif. Residues N274, K275, D277, and A331 each coordinate GTP. A G5 motif region spans residues 329 to 334 (TCATDT).

This sequence belongs to the G-alpha family. G(q) subfamily. G proteins are composed of 3 units; alpha, beta and gamma. The alpha chain contains the guanine nucleotide binding site. Interacts (GDP-bound form) with RIC8A (via C-terminus); promoting GNAQ folding and association with the plasma membrane. Binds NHERF1. Forms a complex with PECAM1 and BDKRB2. Interacts with GAS2L2. Palmitoylated by ZDHHC3 and ZDHHC7. Palmitoylation occurs in the Golgi and participates in the localization of GNAQ to the plasma membrane. In terms of processing, histaminylated at Gln-209 residues by TGM2.

The protein localises to the cell membrane. Its subcellular location is the golgi apparatus. The protein resides in the nucleus. It is found in the nucleus membrane. The catalysed reaction is GTP + H2O = GDP + phosphate + H(+). Guanine nucleotide-binding proteins (G proteins) function as transducers downstream of G protein-coupled receptors (GPCRs) in numerous signaling cascades. The alpha chain contains the guanine nucleotide binding site and alternates between an active, GTP-bound state and an inactive, GDP-bound state. Signaling by an activated GPCR promotes GDP release and GTP binding. The alpha subunit has a low GTPase activity that converts bound GTP to GDP, thereby terminating the signal. Both GDP release and GTP hydrolysis are modulated by numerous regulatory proteins. Signaling is mediated via phospholipase C-beta-dependent inositol lipid hydrolysis for signal propagation: activates phospholipase C-beta: following GPCR activation, GNAQ activates PLC-beta (PLCB1, PLCB2, PLCB3 or PLCB4), leading to production of diacylglycerol (DAG) and inositol 1,4,5-trisphosphate (IP3). Required for platelet activation. Regulates B-cell selection and survival and is required to prevent B-cell-dependent autoimmunity. Regulates chemotaxis of BM-derived neutrophils and dendritic cells (in vitro). Transduces FFAR4 signaling in response to long-chain fatty acids (LCFAs). Together with GNA11, required for heart development. In Mus musculus (Mouse), this protein is Guanine nucleotide-binding protein G(q) subunit alpha (Gnaq).